A 45-amino-acid chain; its full sequence is Keratin-associated protein 22-2 (45 aa).

The protein belongs to the KRTAP type 20 family. Interacts with hair keratins.

Functionally, in the hair cortex, hair keratin intermediate filaments are embedded in an interfilamentous matrix, consisting of hair keratin-associated proteins (KRTAP), which are essential for the formation of a rigid and resistant hair shaft through their extensive disulfide bond cross-linking with abundant cysteine residues of hair keratins. The matrix proteins include the high-sulfur and high-glycine-tyrosine keratins. The chain is Keratin-associated protein 22-2 (KRTAP22-2) from Homo sapiens (Human).